Consider the following 307-residue polypeptide: Regulating synaptic membrane exocytosis protein 3 (307 aa).

Residues 86 to 120 (STETGIAVEMRSRVTRQGSRESTDGSTNSNSSEGT) are disordered. The span at 109 to 119 (DGSTNSNSSEG) shows a compositional bias: polar residues. A C2 domain is found at 155-273 (PMGDVHIAIM…DLSAVVTGWY (119 aa)). Phosphoserine is present on residues S294 and S297.

As to quaternary structure, binds PPFIA3. Does not bind RAB3. In terms of tissue distribution, expressed exclusively in brain with significant levels in cortex, cerebellum and olfactory bulb. Detected at lower level in hippocampus.

The protein localises to the synapse. Regulates synaptic membrane exocytosis. This Rattus norvegicus (Rat) protein is Regulating synaptic membrane exocytosis protein 3 (Rims3).